Here is a 60-residue protein sequence, read N- to C-terminus: Large ribosomal subunit protein bL32 (60 aa).

The protein belongs to the bacterial ribosomal protein bL32 family.

In Streptococcus mutans serotype c (strain ATCC 700610 / UA159), this protein is Large ribosomal subunit protein bL32.